A 96-amino-acid chain; its full sequence is Protein S100-A10 (96 aa).

Positions Asp62–Ser73 are ancestral calcium site.

Belongs to the S-100 family. In terms of assembly, tetramer of 2 light chains (p10) and 2 heavy chains (annexin II).

Functionally, because p10 induces the dimerization of annexin II (p36), it may function as a regulator of protein phosphorylation in that the p36 monomer is the preferred target (in vitro) of tyrosine-specific kinase. This chain is Protein S100-A10 (s100a10), found in Xenopus laevis (African clawed frog).